The chain runs to 220 residues: Uracil-DNA glycosylase (220 aa).

Asp60 acts as the Proton acceptor in catalysis.

This sequence belongs to the uracil-DNA glycosylase (UDG) superfamily. UNG family.

It is found in the cytoplasm. The catalysed reaction is Hydrolyzes single-stranded DNA or mismatched double-stranded DNA and polynucleotides, releasing free uracil.. In terms of biological role, excises uracil residues from the DNA which can arise as a result of misincorporation of dUMP residues by DNA polymerase or due to deamination of cytosine. The polypeptide is Uracil-DNA glycosylase (Francisella tularensis subsp. novicida (strain U112)).